Reading from the N-terminus, the 39-residue chain is Alpha-conotoxin ArIA (39 aa).

Positions 1-17 are excised as a propeptide; sequence SDGRNVAAKAFHRIGRT. 2 cysteine pairs are disulfide-bonded: Cys22/Cys28 and Cys23/Cys36. The interval 24-26 is ser-Xaa-Pro motif, crucial for potent interaction with nAChR; the sequence is SNP. Pro33 is modified (4-hydroxyproline; in ArIA).

The protein belongs to the conotoxin A superfamily. In terms of tissue distribution, expressed by the venom duct.

It is found in the secreted. Its function is as follows. Alpha-conotoxins act on postsynaptic membranes, they bind to the nicotinic acetylcholine receptors (nAChR) and thus inhibit them. This toxin acts as a competitive inhibitor and is 3-fold more potent on alpha-7/CHRNA7 nAChRs (IC(50)=6 nM) than on alpha-3-beta-2/CHRNA3-CHRNB2 nAChR (IC(50)=18 nM). Acts as a competitive inhibitor and is 33-fold more potent on alpha-7/CHRNA7 nAChRs (IC(50)=1.8 nM) than on alpha-3-beta-2/CHRNA3-CHRNB2 nAChR (IC(50)=60.1 nM). In Conus arenatus (Sand-dusted cone), this protein is Alpha-conotoxin ArIA.